Here is a 259-residue protein sequence, read N- to C-terminus: Ribosomal RNA small subunit methyltransferase A (259 aa).

Positions 13, 15, 40, 61, 85, and 103 each coordinate S-adenosyl-L-methionine.

It belongs to the class I-like SAM-binding methyltransferase superfamily. rRNA adenine N(6)-methyltransferase family. RsmA subfamily.

Its subcellular location is the cytoplasm. The enzyme catalyses adenosine(1518)/adenosine(1519) in 16S rRNA + 4 S-adenosyl-L-methionine = N(6)-dimethyladenosine(1518)/N(6)-dimethyladenosine(1519) in 16S rRNA + 4 S-adenosyl-L-homocysteine + 4 H(+). Specifically dimethylates two adjacent adenosines (A1518 and A1519) in the loop of a conserved hairpin near the 3'-end of 16S rRNA in the 30S particle. May play a critical role in biogenesis of 30S subunits. This is Ribosomal RNA small subunit methyltransferase A from Neisseria meningitidis serogroup A / serotype 4A (strain DSM 15465 / Z2491).